The following is a 440-amino-acid chain: Diels-Alderase mycB (440 aa).

Residues 1-18 (MGYLVKLACGLLLPLATA) form the signal peptide. N-linked (GlcNAc...) asparagine glycans are attached at residues Asn80, Asn155, and Asn332.

Belongs to the Diels-Alderase family.

The catalysed reaction is (5S)-5-(2-methylpropyl)-3-[(2E,6R,8E,10E,12E)-6,8,10,12-tetramethyltetradeca-2,8,10,12-tetraenoyl]-2,5-dihydro-1H-pyrrol-2-one = (5S)-3-[(1S,2R,4aR,6R,8aS)-2-(but-2-en-2-yl)-3,4a,6-trimethyl-1,2,4a,5,6,7,8,8a-octahydronaphthalene-1-carbonyl]-5-(2-methylpropyl)-2,5-dihydro-1H-pyrrol-2-one. It carries out the reaction (5Z)-5-(2-methylpropylidene)-3-[(2E,6R,8E,10E,12E)-6,8,10,12-tetramethyltetradeca-2,8,10,12-tetraenoyl]-2,5-dihydro-1H-pyrrol-2-one = myceliothermophin E. It functions in the pathway mycotoxin biosynthesis. Its function is as follows. Diels-Alderase; part of the gene cluster that mediates the biosynthesis of myceliothermophins, mycotoxins that contain a trans-fused decalin ring system connected to a conjugated 3-pyrrolin-2-one moiety and that have potential anti-tumor properties. The polyketide synthase module (PKS) of the PKS-NRPS mycA is responsible for the synthesis of the octaketide backbone. The downstream nonribosomal peptide synthetase (NRPS) module then amidates the carboxyl end of the octaketide with a leucine. A reductase-like domain (R) at the C-terminus catalyzes the reductive release of the polyketide-amino acid intermediate. Because mycA lacks a designated enoylreductase (ER) domain, the required activity is provided the enoyl reductase mycC. Following mycA-catalyzed construction and release of aminoacyl polyketide aldehyde, Knoevenagel condensation yields the expected ketone. This C18 keto acyclic precursor is the substrate of the Diels-Alderase mycB, that catalyzes the Diels-Alder cycloaddition to produce myceliothermophin E. A yet unknown oxygenase involved in the production of myceliothermophin A, via substitution with a hydroxyl group at the C21, has still to be identified. In Thermothelomyces thermophilus (strain ATCC 42464 / BCRC 31852 / DSM 1799) (Sporotrichum thermophile), this protein is Diels-Alderase mycB.